The chain runs to 183 residues: Outer membrane protein H.8 (183 aa).

The N-terminal stretch at 1–17 (MKAYLALISAAVIGLAA) is a signal peptide. Cys-18 carries N-palmitoyl cysteine lipidation. Cys-18 is lipidated: S-diacylglycerol cysteine. The segment at 27-51 (AEATPAAEAPASEAPAAEAAPADAA) is disordered. Residues 57 to 183 (GNCAATVESN…LMNGKVTLVD (127 aa)) form the Plastocyanin-like domain. Positions 102, 166, 171, and 175 each coordinate Cu cation.

It depends on Cu cation as a cofactor.

It is found in the cell outer membrane. In Neisseria meningitidis serogroup C / serotype 2a (strain ATCC 700532 / DSM 15464 / FAM18), this protein is Outer membrane protein H.8.